A 272-amino-acid polypeptide reads, in one-letter code: Flagellin (272 aa).

It belongs to the bacterial flagellin family.

Its subcellular location is the secreted. It is found in the bacterial flagellum. Its function is as follows. Flagellin is the subunit protein which polymerizes to form the filaments of bacterial flagella. This is Flagellin (hag) from Halalkalibacterium halodurans (strain ATCC BAA-125 / DSM 18197 / FERM 7344 / JCM 9153 / C-125) (Bacillus halodurans).